Consider the following 291-residue polypeptide: uncharacterized protein (291 aa).

Disordered regions lie at residues 1–62 (MELR…SSKK), 220–242 (PLPA…TDKV), and 255–291 (ENNK…SRKK). Positions 18–41 (EPAKNKSERSIESNERVGTREAKS) are enriched in basic and acidic residues. Polar residues-rich tracts occupy residues 42–58 (ENTS…ATTD) and 226–236 (PSLNLSPQKVP). S267 bears the Phosphoserine mark.

It localises to the cytoplasm. Its subcellular location is the nucleus. This is an uncharacterized protein from Saccharomyces cerevisiae (strain ATCC 204508 / S288c) (Baker's yeast).